Here is a 428-residue protein sequence, read N- to C-terminus: Serine--tRNA ligase (428 aa).

231-233 (TAE) is an L-serine binding site. 262–264 (RSE) is an ATP binding site. Position 285 (glutamate 285) interacts with L-serine. 349 to 352 (EISS) provides a ligand contact to ATP. L-serine is bound at residue serine 385.

It belongs to the class-II aminoacyl-tRNA synthetase family. Type-1 seryl-tRNA synthetase subfamily. In terms of assembly, homodimer. The tRNA molecule binds across the dimer.

It localises to the cytoplasm. The catalysed reaction is tRNA(Ser) + L-serine + ATP = L-seryl-tRNA(Ser) + AMP + diphosphate + H(+). It carries out the reaction tRNA(Sec) + L-serine + ATP = L-seryl-tRNA(Sec) + AMP + diphosphate + H(+). Its pathway is aminoacyl-tRNA biosynthesis; selenocysteinyl-tRNA(Sec) biosynthesis; L-seryl-tRNA(Sec) from L-serine and tRNA(Sec): step 1/1. Catalyzes the attachment of serine to tRNA(Ser). Is also able to aminoacylate tRNA(Sec) with serine, to form the misacylated tRNA L-seryl-tRNA(Sec), which will be further converted into selenocysteinyl-tRNA(Sec). This is Serine--tRNA ligase from Staphylococcus aureus (strain USA300).